A 648-amino-acid polypeptide reads, in one-letter code: Transketolase (648 aa).

Histidine 22 contacts substrate. Residues histidine 62 and 109–111 (GPL) each bind thiamine diphosphate. Aspartate 150 serves as a coordination point for Mg(2+). Residues glycine 151 and asparagine 180 each coordinate thiamine diphosphate. Positions 180 and 182 each coordinate Mg(2+). 3 residues coordinate substrate: histidine 252, arginine 345, and serine 372. Position 252 (histidine 252) interacts with thiamine diphosphate. Catalysis depends on glutamate 397, which acts as the Proton donor. Phenylalanine 423 is a binding site for thiamine diphosphate. Substrate is bound by residues histidine 447, aspartate 455, and arginine 506.

The protein belongs to the transketolase family. Homodimer. The cofactor is Mg(2+). Ca(2+) serves as cofactor. Mn(2+) is required as a cofactor. Requires Co(2+) as cofactor. It depends on thiamine diphosphate as a cofactor.

The catalysed reaction is D-sedoheptulose 7-phosphate + D-glyceraldehyde 3-phosphate = aldehydo-D-ribose 5-phosphate + D-xylulose 5-phosphate. In terms of biological role, catalyzes the transfer of a two-carbon ketol group from a ketose donor to an aldose acceptor, via a covalent intermediate with the cofactor thiamine pyrophosphate. The protein is Transketolase (tkt) of Mycoplasma pneumoniae (strain ATCC 29342 / M129 / Subtype 1) (Mycoplasmoides pneumoniae).